We begin with the raw amino-acid sequence, 304 residues long: Phosphatidylserine decarboxylase proenzyme (304 aa).

Catalysis depends on charge relay system; for autoendoproteolytic cleavage activity residues D90, H147, and S253. The active-site Schiff-base intermediate with substrate; via pyruvic acid; for decarboxylase activity is the S253. Pyruvic acid (Ser); by autocatalysis is present on S253.

Belongs to the phosphatidylserine decarboxylase family. PSD-B subfamily. Prokaryotic type I sub-subfamily. In terms of assembly, heterodimer of a large membrane-associated beta subunit and a small pyruvoyl-containing alpha subunit. It depends on pyruvate as a cofactor. Post-translationally, is synthesized initially as an inactive proenzyme. Formation of the active enzyme involves a self-maturation process in which the active site pyruvoyl group is generated from an internal serine residue via an autocatalytic post-translational modification. Two non-identical subunits are generated from the proenzyme in this reaction, and the pyruvate is formed at the N-terminus of the alpha chain, which is derived from the carboxyl end of the proenzyme. The autoendoproteolytic cleavage occurs by a canonical serine protease mechanism, in which the side chain hydroxyl group of the serine supplies its oxygen atom to form the C-terminus of the beta chain, while the remainder of the serine residue undergoes an oxidative deamination to produce ammonia and the pyruvoyl prosthetic group on the alpha chain. During this reaction, the Ser that is part of the protease active site of the proenzyme becomes the pyruvoyl prosthetic group, which constitutes an essential element of the active site of the mature decarboxylase.

Its subcellular location is the cell membrane. It catalyses the reaction a 1,2-diacyl-sn-glycero-3-phospho-L-serine + H(+) = a 1,2-diacyl-sn-glycero-3-phosphoethanolamine + CO2. The protein operates within phospholipid metabolism; phosphatidylethanolamine biosynthesis; phosphatidylethanolamine from CDP-diacylglycerol: step 2/2. Functionally, catalyzes the formation of phosphatidylethanolamine (PtdEtn) from phosphatidylserine (PtdSer). The sequence is that of Phosphatidylserine decarboxylase proenzyme from Dickeya dadantii (strain 3937) (Erwinia chrysanthemi (strain 3937)).